A 433-amino-acid chain; its full sequence is Citrate synthase, mitochondrial (433 aa).

Active-site residues include His-274 and His-320. Arg-329 is a binding site for oxaloacetate. Residue Asp-375 is part of the active site. The oxaloacetate site is built by Arg-401 and Arg-421.

This sequence belongs to the citrate synthase family. Homodimer.

It localises to the mitochondrion matrix. The enzyme catalyses oxaloacetate + acetyl-CoA + H2O = citrate + CoA + H(+). It participates in carbohydrate metabolism; tricarboxylic acid cycle; isocitrate from oxaloacetate: step 1/2. Key enzyme of the Krebs tricarboxylic acid cycle which catalyzes the synthesis of citrate from acetyl coenzyme A and oxaloacetate. In Gallus gallus (Chicken), this protein is Citrate synthase, mitochondrial (CS).